Consider the following 290-residue polypeptide: GTPase Era (290 aa).

Residues 2–168 form the Era-type G domain; that stretch reads KVCIISILGR…IEILKEYAYN (167 aa). Positions 10-17 are G1; sequence GRPNVGKS. GTP is bound at residue 10–17; the sequence is GRPNVGKS. The G2 stretch occupies residues 36-40; it reads QTTRD. Residues 57–60 form a G3 region; the sequence is DTPG. Residues 57-61 and 118-121 contribute to the GTP site; these read DTPGI and SKID. Residues 118–121 form a G4 region; that stretch reads SKID. Positions 147-149 are G5; the sequence is VSN. Positions 199–275 constitute a KH type-2 domain; the sequence is LTDELPHSIA…TLNLKVKVSN (77 aa).

The protein belongs to the TRAFAC class TrmE-Era-EngA-EngB-Septin-like GTPase superfamily. Era GTPase family. In terms of assembly, monomer.

The protein resides in the cytoplasm. The protein localises to the cell membrane. Its function is as follows. An essential GTPase that binds both GDP and GTP, with rapid nucleotide exchange. Plays a role in 16S rRNA processing and 30S ribosomal subunit biogenesis and possibly also in cell cycle regulation and energy metabolism. The protein is GTPase Era of Mycoplasmopsis agalactiae (strain NCTC 10123 / CIP 59.7 / PG2) (Mycoplasma agalactiae).